A 1020-amino-acid chain; its full sequence is Calcium-transporting ATPase sarcoplasmic/endoplasmic reticulum type (1020 aa).

Residues 1-48 (MEDGHSKTVEQSLNFFGTDPERGLTLDQIKANQKKYGPNELPTEEGKS) are Cytoplasmic-facing. The chain crosses the membrane as a helical span at residues 49-69 (IWQLVLEQFDDLLVKILLLAA). Residues 70–89 (IISFVLALFEEHEETFTAFV) lie on the Lumenal side of the membrane. A helical transmembrane segment spans residues 90-110 (EPLVILLILIANAVVGVWQER). Residues 111-253 (NAESAIEALK…EIKTPLQQKL (143 aa)) are Cytoplasmic-facing. At serine 240 the chain carries Phosphoserine. A helical transmembrane segment spans residues 254-273 (DEFGEQLSKVISVICVAVWA). Topologically, residues 274-295 (INIGHFNDPAHGGSWIKGAIYY) are lumenal. Residues 296–313 (FKIAVALAVAAIPEGLPA) traverse the membrane as a helical segment. Ca(2+) contacts are provided by valine 304, alanine 305, isoleucine 307, and glutamate 309. Over 314–757 (VITTCLALGT…EEGRAIYNNM (444 aa)) the chain is Cytoplasmic. Catalysis depends on aspartate 351, which acts as the 4-aspartylphosphate intermediate. Residues aspartate 703 and aspartate 707 each contribute to the Mg(2+) site. A helical transmembrane segment spans residues 758–777 (KQFIRYLISSNIGEVVSIFL). Ca(2+) contacts are provided by asparagine 768 and glutamate 771. Topologically, residues 778–787 (TAALGLPEAL) are lumenal. Residues 788–808 (IPVQLLWVNLVTDGLPATALG) traverse the membrane as a helical segment. Ca(2+)-binding residues include asparagine 796, threonine 799, and aspartate 800. Topologically, residues 809-828 (FNPPDLDIMEKPPRKADEGL) are cytoplasmic. A helical membrane pass occupies residues 829 to 851 (ISGWLFFRYMAIGFYVGAATVGA). At 852–897 (AAWWFVFSDEGPKLSYWQLTHHLSCLGGGDEFKGVDCKIFSDPHAM) the chain is on the lumenal side. Residues 898–917 (TMALSVLVTIEMLNAMNSLS) traverse the membrane as a helical segment. Glutamate 908 serves as a coordination point for Ca(2+). Residues 918 to 930 (ENQSLITMPPWCN) lie on the Cytoplasmic side of the membrane. A helical transmembrane segment spans residues 931 to 949 (LWLIGSMALSFTLHFVILY). The Lumenal segment spans residues 950–964 (VDVLSTVFQVTPLSA). The chain crosses the membrane as a helical span at residues 965–985 (EEWITVMKFSIPVVLLDETLK). Residues 986 to 1020 (FVARKIADGESPIYKMHGIVLMWAVFFGLLYAMML) are Cytoplasmic-facing.

This sequence belongs to the cation transport ATPase (P-type) (TC 3.A.3) family. In terms of assembly, interacts with SclA and SclB.

Its subcellular location is the endoplasmic reticulum membrane. The protein resides in the sarcoplasmic reticulum membrane. The enzyme catalyses Ca(2+)(in) + ATP + H2O = Ca(2+)(out) + ADP + phosphate + H(+). Its function is as follows. This magnesium-dependent enzyme catalyzes the hydrolysis of ATP coupled with the transport of calcium. The sequence is that of Calcium-transporting ATPase sarcoplasmic/endoplasmic reticulum type from Drosophila melanogaster (Fruit fly).